Here is a 475-residue protein sequence, read N- to C-terminus: Probable proline--tRNA ligase, mitochondrial (475 aa).

A mitochondrion-targeting transit peptide spans 1-29; sequence MEGLLTRCRTLSALATCSLRHSRCIVRKC.

The protein belongs to the class-II aminoacyl-tRNA synthetase family.

It localises to the mitochondrion matrix. It catalyses the reaction tRNA(Pro) + L-proline + ATP = L-prolyl-tRNA(Pro) + AMP + diphosphate. In terms of biological role, mitochondrial aminoacyl-tRNA synthetase that catalyzes the specific attachment of the proline amino acid (aa) to the homologous transfer RNA (tRNA), further participating in protein synthesis. The reaction occurs in a two steps: proline is first activated by ATP to form Pro-AMP and then transferred to the acceptor end of tRNA(Pro). This is Probable proline--tRNA ligase, mitochondrial (Pars2) from Rattus norvegicus (Rat).